The primary structure comprises 447 residues: Argininosuccinate synthase (447 aa).

Residues 17–25 (AFSGGLDTS) and A43 contribute to the ATP site. Y99 provides a ligand contact to L-citrulline. G129 and T131 together coordinate ATP. Residues T131, N135, and D136 each coordinate L-aspartate. N135 contributes to the L-citrulline binding site. Position 136 (D136) interacts with ATP. Positions 139 and 192 each coordinate L-citrulline. D194 is an ATP binding site. T201, E203, and E280 together coordinate L-citrulline.

Belongs to the argininosuccinate synthase family. Type 2 subfamily. As to quaternary structure, homotetramer.

The protein resides in the cytoplasm. It catalyses the reaction L-citrulline + L-aspartate + ATP = 2-(N(omega)-L-arginino)succinate + AMP + diphosphate + H(+). The protein operates within amino-acid biosynthesis; L-arginine biosynthesis; L-arginine from L-ornithine and carbamoyl phosphate: step 2/3. The polypeptide is Argininosuccinate synthase (Shigella flexneri serotype 5b (strain 8401)).